Here is a 147-residue protein sequence, read N- to C-terminus: Thyrotropin subunit beta (147 aa).

An N-terminal signal peptide occupies residues 1 to 20 (MELSVAMYGLLCLLFSQAVP). Cystine bridges form between Cys22/Cys72, Cys36/Cys87, Cys39/Cys127, Cys47/Cys103, Cys51/Cys105, and Cys108/Cys115. Asn43 is a glycosylation site (N-linked (GlcNAc...) asparagine).

This sequence belongs to the glycoprotein hormones subunit beta family. Heterodimer of a common alpha chain and a unique beta chain which confers biological specificity to thyrotropin, lutropin, follitropin and gonadotropin. Pituitary gland. Higher levels seen in immature fishes than the mature fishes.

Its subcellular location is the secreted. Indispensable for the control of thyroid structure and metabolism. May play some role in the biological processes of the immature fishes. The sequence is that of Thyrotropin subunit beta (tshb) from Oncorhynchus mykiss (Rainbow trout).